A 599-amino-acid chain; its full sequence is Elongation factor 4 (599 aa).

The region spanning 5 to 187 is the tr-type G domain; sequence NRIRNFSIVA…AIVTRLPAPK (183 aa). Residues 17–22 and 134–137 contribute to the GTP site; these read DHGKST and NKVD.

This sequence belongs to the TRAFAC class translation factor GTPase superfamily. Classic translation factor GTPase family. LepA subfamily.

It localises to the cell inner membrane. The enzyme catalyses GTP + H2O = GDP + phosphate + H(+). Functionally, required for accurate and efficient protein synthesis under certain stress conditions. May act as a fidelity factor of the translation reaction, by catalyzing a one-codon backward translocation of tRNAs on improperly translocated ribosomes. Back-translocation proceeds from a post-translocation (POST) complex to a pre-translocation (PRE) complex, thus giving elongation factor G a second chance to translocate the tRNAs correctly. Binds to ribosomes in a GTP-dependent manner. This chain is Elongation factor 4, found in Jannaschia sp. (strain CCS1).